A 441-amino-acid chain; its full sequence is T-box transcription factor TBX20 (441 aa).

Positions Leu103 to Asp282 form a DNA-binding region, T-box.

Expressed throughout all cardiac tissue during later stages of development. Also expressed in the cement gland, jugular vein, lung bud, cloacal aperture, rhombomeres 2, 4, 6 and 8 and in a subset of motor neurons.

It localises to the nucleus. Functionally, transcriptional regulator that may be involved in heart developmental processes. This chain is T-box transcription factor TBX20 (tbx20), found in Xenopus laevis (African clawed frog).